The sequence spans 514 residues: Monocarboxylate transporter 10 (514 aa).

A disordered region spans residues 1-64; it reads MVPSQEEPAA…TGNQEPPEPP (64 aa). The Cytoplasmic segment spans residues 1 to 65; it reads MVPSQEEPAA…GNQEPPEPPE (65 aa). The chain crosses the membrane as a helical span at residues 66-86; sequence GGWGWLVMLAAMWCNGSVFGI. Residues 87–113 lie on the Extracellular side of the membrane; sequence QNAYGVLFVSMLETFGAKDDDNMAFKA. Residues 114–134 form a helical membrane-spanning segment; sequence AWVGSLSMGMIFFCCPIVSVF. The Cytoplasmic portion of the chain corresponds to 135-143; it reads TDMFGCRRT. The helical transmembrane segment at 144–164 threads the bilayer; the sequence is AVLGAAVGFVGLMSSSFVSSI. Over 165 to 170 the chain is Extracellular; it reads EPLYFT. A helical membrane pass occupies residues 171 to 191; the sequence is YGVVFACGCSFAYQPSLVILG. The Cytoplasmic segment spans residues 192–199; sequence HYFKKRLG. The helical transmembrane segment at 200–220 threads the bilayer; that stretch reads LVNGIVTAGSSVFTILLPLLL. Over 221–227 the chain is Extracellular; that stretch reads GNLTSTV. The helical transmembrane segment at 228 to 248 threads the bilayer; the sequence is GLCYTLRILCIFMFVLFLAGF. Residues 249–290 are Cytoplasmic-facing; the sequence is TYRPLVPSSKEKESEDSRSSFFSRRKLSPPKKIFNFALFKET. At Ser262 the chain carries Phosphoserine. A helical transmembrane segment spans residues 291 to 311; that stretch reads AYAVWAAGIPLALFGYFVPYV. Residues 312-328 are Extracellular-facing; sequence HLMNHVKERFKDVNNKE. The helical transmembrane segment at 329 to 349 threads the bilayer; the sequence is VLFMCIGVTSGVGRLLFGRIA. Asp350 is a topological domain (cytoplasmic). A helical transmembrane segment spans residues 351-371; it reads YLPGVKKVYLQVLSFFFIGLT. Topologically, residues 372-395 are extracellular; that stretch reads SMMIPLCSVFGALIALCLIMGLFD. A helical transmembrane segment spans residues 396–416; that stretch reads GCFISIMAPIAFELVGPQDAS. Residues 417–418 are Cytoplasmic-facing; sequence QA. A helical transmembrane segment spans residues 419–439; the sequence is IGFLLGFMSIPMTVGPPVAGL. Topologically, residues 440–450 are extracellular; it reads LHDKLGSYDLA. Residues 451–471 traverse the membrane as a helical segment; sequence FYLAGIPPFIGGAVLCLIPWI. The Cytoplasmic segment spans residues 472–514; it reads HSKKQREISKNTGGEKMEKMLANQSSLLSSSSGIFKKESDSII. 4 positions are modified to phosphoserine: Ser497, Ser500, Ser502, and Ser503.

The protein belongs to the major facilitator superfamily. Monocarboxylate porter (TC 2.A.1.13) family. In terms of processing, not N-glycosylated. Strongly expressed in intestine, placenta and liver. In small intestine is detected in the basolateral membrane (at protein level).

It is found in the cell membrane. Its subcellular location is the basolateral cell membrane. The catalysed reaction is L-tryptophan(in) = L-tryptophan(out). It carries out the reaction L-tyrosine(in) = L-tyrosine(out). It catalyses the reaction L-phenylalanine(in) = L-phenylalanine(out). The enzyme catalyses 3,3',5-triiodo-L-thyronine(out) = 3,3',5-triiodo-L-thyronine(in). The catalysed reaction is L-thyroxine(out) = L-thyroxine(in). In terms of biological role, sodium- and proton-independent thyroid hormones and aromatic acids transporter. Mediates both uptake and efflux of 3,5,3'-triiodothyronine (T3) and 3,5,3',5'-tetraiodothyronine (T4) with high affinity, suggesting a role in the homeostasis of thyroid hormone levels. Responsible for low affinity bidirectional transport of the aromatic amino acids, such as phenylalanine, tyrosine, tryptophan and L-3,4-dihydroxyphenylalanine (L-dopa). Plays an important role in homeostasis of aromatic amino acids. The sequence is that of Monocarboxylate transporter 10 (Slc16a10) from Rattus norvegicus (Rat).